Reading from the N-terminus, the 944-residue chain is Translation initiation factor IF-2 (944 aa).

Disordered regions lie at residues 61 to 157 (IQAN…KAKQ) and 173 to 281 (TQSN…SHKI). Over residues 132–150 (TFENQTPPTENTPKVVSHS) the composition is skewed to polar residues. Over residues 175–185 (SNANNASNANN) the composition is skewed to low complexity. Positions 186 to 203 (AKKEISEVKKQEQEIKRH) are enriched in basic and acidic residues. The segment covering 204–215 (ENIKRRTGFRVI) has biased composition (basic residues). Basic and acidic residues predominate over residues 244–259 (EDIKKEWQEKDKQEAK). Positions 443–612 (ERPPVVTIMG…LIQAGIMELK (170 aa)) constitute a tr-type G domain. The G1 stretch occupies residues 452–459 (GHVDHGKT). GTP is bound at residue 452–459 (GHVDHGKT). The interval 477-481 (GITQH) is G2. The interval 498–501 (DTPG) is G3. Residues 498–502 (DTPGH) and 552–555 (NKMD) contribute to the GTP site. The tract at residues 552–555 (NKMD) is G4. A G5 region spans residues 588-590 (SAK).

The protein belongs to the TRAFAC class translation factor GTPase superfamily. Classic translation factor GTPase family. IF-2 subfamily.

Its subcellular location is the cytoplasm. Functionally, one of the essential components for the initiation of protein synthesis. Protects formylmethionyl-tRNA from spontaneous hydrolysis and promotes its binding to the 30S ribosomal subunits. Also involved in the hydrolysis of GTP during the formation of the 70S ribosomal complex. The protein is Translation initiation factor IF-2 (infB) of Helicobacter pylori (strain ATCC 700392 / 26695) (Campylobacter pylori).